Here is a 434-residue protein sequence, read N- to C-terminus: Forkhead box protein A2-A (434 aa).

Positions 149-243 (KPPYSYISLI…ENGCYLRRQK (95 aa)) form a DNA-binding region, fork-head. Positions 249–262 (KKPSLREGGGKKLS) are enriched in basic and acidic residues. Disordered stretches follow at residues 249–339 (KKPS…QSHL) and 408–434 (SGLE…MNSS). 2 stretches are compositionally biased toward low complexity: residues 263-291 (EGAS…SSSP) and 317-333 (ASQA…VLSH). Over residues 408–422 (SGLESSPITSDTSYY) the composition is skewed to polar residues.

In terms of tissue distribution, at gastrula stage, expressed in both the anterior and posterior endoderm, with endodermal expression persisting into early tailbud stages. Expression is absent in gastrula stage ectoderm. During tailbud stages, expressed in the pharyngeal region, the neural floor plate, the midbrain, hindbrain and in cranial neural crest cells. Expressed in the foregut of hatching larvae. In tadpoles, expressed in the pharyngeal pouches and in other anterior endodermal regions. Within the tadpole nervous system, expressed in the neural floor plate, at high levels in the ventral midbrain and hindbrain, and at lower levels in the spinal cord. Expressed in the adult lung and brain.

The protein localises to the nucleus. In terms of biological role, acts as a transcriptional activator during early development, limiting the extent of mesoderm formation in the gastrula. Binds to DNA via the target sequence 5'-GT[AC]AACA-3', with 5'-GTAAACA-3' being the preferred binding site. The chain is Forkhead box protein A2-A (foxa2-a) from Xenopus laevis (African clawed frog).